A 191-amino-acid chain; its full sequence is Ion-translocating oxidoreductase complex subunit B (191 aa).

The interval 1–26 (MSLVLVAVLALLGLCLIAGAILGFAA) is hydrophobic. A 4Fe-4S domain is found at 32–90 (EGDPIAEQINALLPQTQCGQCGYPGCKPYAEAIAGGDKINKCPPGGEATIQALADLLDV). The [4Fe-4S] cluster site is built by cysteine 49, cysteine 52, cysteine 57, cysteine 73, cysteine 114, cysteine 117, cysteine 120, cysteine 124, cysteine 144, cysteine 147, cysteine 150, and cysteine 154. 4Fe-4S ferredoxin-type domains are found at residues 105 to 134 (MVAF…GAAR) and 135 to 164 (QMHT…MIEV).

It belongs to the 4Fe4S bacterial-type ferredoxin family. RnfB subfamily. The complex is composed of six subunits: RnfA, RnfB, RnfC, RnfD, RnfE and RnfG. It depends on [4Fe-4S] cluster as a cofactor.

The protein localises to the cell inner membrane. Its function is as follows. Part of a membrane-bound complex that couples electron transfer with translocation of ions across the membrane. In Ectopseudomonas mendocina (strain ymp) (Pseudomonas mendocina), this protein is Ion-translocating oxidoreductase complex subunit B.